The sequence spans 33 residues: U1-pseudomyrmecitoxin-Pt1 subunit LS1 (33 aa).

This sequence belongs to the myrmexin family. Heterodimer composed of subunit LS1 and subunit SS1 (U1-PSDTX-Pt1b), heterodimer composed of subunit LS1 and SS2 (U1-PSDTX-Pt1b), and heterodimer composed of subunit LS1 and SS3; disulfide-linked. As to expression, expressed by the venom gland.

It is found in the secreted. Its function is as follows. This heterodimer may have anti-inflammatory properties, since the myrmexin complex (composed of 6 SS-LS heterodimers) inhibits carrageenin-induced edema in a dose-dependent manner (after subcutaneous injection into rats). This chain is U1-pseudomyrmecitoxin-Pt1 subunit LS1, found in Pseudomyrmex triplarinus (Ant).